A 588-amino-acid chain; its full sequence is Adenine deaminase (588 aa).

This sequence belongs to the metallo-dependent hydrolases superfamily. Adenine deaminase family. In terms of assembly, homodimer. Mn(2+) serves as cofactor.

The catalysed reaction is adenine + H2O + H(+) = hypoxanthine + NH4(+). The polypeptide is Adenine deaminase (Escherichia coli (strain SE11)).